Here is a 233-residue protein sequence, read N- to C-terminus: MGRKPVEALAMDMLHFEKQAYRQGFQLVAGIDEVGRGPLAGPVVAAAVVVPAGVRLPGVADSKKLSAGQRESCCEDILSCGCDVGIGRVEPSEIDRVNILQATFQAMIAAVAGLKTPPHCLLIDGPYELPLFIAQKGIPQGDAKSLSIAAASIVAKVHRDRLMCEYHLKYPVYGFDRNKGYGTARHLDALRRYGPCPIHRLSFGGVRASEGEGLETAAGRQSSEGKKGRRPRG.

The region spanning 26–215 (QLVAGIDEVG…VRASEGEGLE (190 aa)) is the RNase H type-2 domain. Residues aspartate 32, glutamate 33, and aspartate 124 each coordinate a divalent metal cation. Residues 211–233 (GEGLETAAGRQSSEGKKGRRPRG) form a disordered region.

Belongs to the RNase HII family. It depends on Mn(2+) as a cofactor. Mg(2+) is required as a cofactor.

It localises to the cytoplasm. It catalyses the reaction Endonucleolytic cleavage to 5'-phosphomonoester.. Functionally, endonuclease that specifically degrades the RNA of RNA-DNA hybrids. The protein is Ribonuclease HII of Syntrophobacter fumaroxidans (strain DSM 10017 / MPOB).